Reading from the N-terminus, the 280-residue chain is Shikimate dehydrogenase (NADP(+)) (280 aa).

Shikimate is bound by residues 18 to 20 (SRS) and Thr65. The active-site Proton acceptor is Lys69. Positions 90 and 105 each coordinate shikimate. NADP(+) contacts are provided by residues 130–134 (GAGGA), 154–159 (NRTLAR), and Leu219. A shikimate-binding site is contributed by Tyr221. Gly242 provides a ligand contact to NADP(+).

The protein belongs to the shikimate dehydrogenase family. In terms of assembly, homodimer.

The enzyme catalyses shikimate + NADP(+) = 3-dehydroshikimate + NADPH + H(+). It participates in metabolic intermediate biosynthesis; chorismate biosynthesis; chorismate from D-erythrose 4-phosphate and phosphoenolpyruvate: step 4/7. Functionally, involved in the biosynthesis of the chorismate, which leads to the biosynthesis of aromatic amino acids. Catalyzes the reversible NADPH linked reduction of 3-dehydroshikimate (DHSA) to yield shikimate (SA). In Mesorhizobium japonicum (strain LMG 29417 / CECT 9101 / MAFF 303099) (Mesorhizobium loti (strain MAFF 303099)), this protein is Shikimate dehydrogenase (NADP(+)).